The sequence spans 837 residues: Phenylalanine--tRNA ligase beta subunit (837 aa).

Residues 39–149 (SASLEGIVTG…EMNIAIPKIG (111 aa)) form the tRNA-binding domain. The 106-residue stretch at 415–520 (IEEQLLLLRR…RLIGYDRFDS (106 aa)) folds into the B5 domain. Mg(2+) contacts are provided by D498, D504, E507, and E508. Residues 743–836 (PTVPSMERDI…LKVEFSAELR (94 aa)) form the FDX-ACB domain.

This sequence belongs to the phenylalanyl-tRNA synthetase beta subunit family. Type 1 subfamily. In terms of assembly, tetramer of two alpha and two beta subunits. It depends on Mg(2+) as a cofactor.

The protein localises to the cytoplasm. The catalysed reaction is tRNA(Phe) + L-phenylalanine + ATP = L-phenylalanyl-tRNA(Phe) + AMP + diphosphate + H(+). The chain is Phenylalanine--tRNA ligase beta subunit from Prochlorococcus marinus (strain SARG / CCMP1375 / SS120).